The following is a 193-amino-acid chain: Molybdopterin synthase catalytic subunit (193 aa).

Substrate-binding positions include 118-119 (HR), lysine 134, and 141-143 (KKE). Residues 159–193 (DRTTTDGTTASSPAPATRPAKGGGCCGSKVRANES) form a disordered region. The span at 163 to 178 (TDGTTASSPAPATRPA) shows a compositional bias: low complexity.

This sequence belongs to the MoaE family. MOCS2B subfamily. As to quaternary structure, heterotetramer; composed of 2 small (MOCS2A) and 2 large (MOCS2B) subunits.

The protein resides in the cytoplasm. It carries out the reaction 2 [molybdopterin-synthase sulfur-carrier protein]-C-terminal-Gly-aminoethanethioate + cyclic pyranopterin phosphate + H2O = molybdopterin + 2 [molybdopterin-synthase sulfur-carrier protein]-C-terminal Gly-Gly + 2 H(+). It participates in cofactor biosynthesis; molybdopterin biosynthesis. Catalytic subunit of the molybdopterin synthase complex, a complex that catalyzes the conversion of precursor Z into molybdopterin. Acts by mediating the incorporation of 2 sulfur atoms from thiocarboxylated MOCS2A into precursor Z to generate a dithiolene group. The chain is Molybdopterin synthase catalytic subunit from Oryza sativa subsp. indica (Rice).